The primary structure comprises 152 residues: Glutaredoxin-related protein 5, mitochondrial (152 aa).

The transit peptide at 1–31 directs the protein to the mitochondrion; sequence MSASLSRAAAALLRWGRSAGGGGLPGAGVRA. The 104-residue stretch at 38–141 folds into the Glutaredoxin domain; it reads AEQLDALVKK…EELKKLGIRS (104 aa). K55 is a glutathione binding site. K55 carries the post-translational modification N6-succinyllysine. C63 serves as a coordination point for [2Fe-2S] cluster. Residues 93 to 97, I105, and 118 to 119 each bind glutathione; these read RQGIK and CD. S151 is subject to Phosphoserine.

Belongs to the glutaredoxin family. Monothiol subfamily. As to quaternary structure, homodimer. Interacts with ISCU. Interacts with BOLA1. Detected in bone, liver, muscle and kidney.

It is found in the mitochondrion matrix. In terms of biological role, monothiol glutaredoxin involved in mitochondrial iron-sulfur (Fe/S) cluster transfer. Receives 2Fe/2S clusters from scaffold protein ISCU and mediates their transfer to apoproteins, to the 4Fe/FS cluster biosynthesis machinery, or export from mitochondrion. Required for normal regulation of hemoglobin synthesis by the iron-sulfur protein ACO1. The polypeptide is Glutaredoxin-related protein 5, mitochondrial (Glrx5) (Mus musculus (Mouse)).